A 298-amino-acid chain; its full sequence is uncharacterized protein (298 aa).

Residues 194–295 form the HTH araC/xylS-type domain; the sequence is KRLNTALIAI…QLSPSQYRKS (102 aa). 2 DNA-binding regions (H-T-H motif) span residues 214–235 and 262–285; these read EQLAELATMSRANFIRIFQQHI and VLAIALEVGYQSEAHFCKVFKNYY.

This is an uncharacterized protein from Haemophilus influenzae (strain ATCC 51907 / DSM 11121 / KW20 / Rd).